The sequence spans 196 residues: Holliday junction branch migration complex subunit RuvA (196 aa).

A domain I region spans residues 1–65 (MIGYLRGKII…EDALQLFGFH (65 aa)). A domain II region spans residues 66–140 (DKEEKNLFLS…GKLVSIEEGG (75 aa)). Residues 140-144 (GVVAK) are flexible linker. Residues 145–196 (AKSVAHTQITSALLNLGYKSQLVDQFVSSLPADIAVEDGIRKGFQTLSGGLS) form a domain III region.

This sequence belongs to the RuvA family. As to quaternary structure, homotetramer. Forms an RuvA(8)-RuvB(12)-Holliday junction (HJ) complex. HJ DNA is sandwiched between 2 RuvA tetramers; dsDNA enters through RuvA and exits via RuvB. An RuvB hexamer assembles on each DNA strand where it exits the tetramer. Each RuvB hexamer is contacted by two RuvA subunits (via domain III) on 2 adjacent RuvB subunits; this complex drives branch migration. In the full resolvosome a probable DNA-RuvA(4)-RuvB(12)-RuvC(2) complex forms which resolves the HJ.

The protein resides in the cytoplasm. Its function is as follows. The RuvA-RuvB-RuvC complex processes Holliday junction (HJ) DNA during genetic recombination and DNA repair, while the RuvA-RuvB complex plays an important role in the rescue of blocked DNA replication forks via replication fork reversal (RFR). RuvA specifically binds to HJ cruciform DNA, conferring on it an open structure. The RuvB hexamer acts as an ATP-dependent pump, pulling dsDNA into and through the RuvAB complex. HJ branch migration allows RuvC to scan DNA until it finds its consensus sequence, where it cleaves and resolves the cruciform DNA. The chain is Holliday junction branch migration complex subunit RuvA from Bdellovibrio bacteriovorus (strain ATCC 15356 / DSM 50701 / NCIMB 9529 / HD100).